The following is a 370-amino-acid chain: Coiled-coil domain-containing protein 89 (370 aa).

The segment at 1–21 (MPQEEKTLRMDTPPPDEILGK) is disordered. Residue threonine 12 is modified to Phosphothreonine. Residues 36–346 (KEMDGLREAL…YDELRLQSEA (311 aa)) are a coiled coil.

It belongs to the CCDC89 family. Interacts with HEY1. In terms of tissue distribution, expression is restricted to the adult testis, where localization is almost exclusive to round spermatids.

It localises to the cytoplasm. It is found in the nucleus. The sequence is that of Coiled-coil domain-containing protein 89 from Mus musculus (Mouse).